A 104-amino-acid polypeptide reads, in one-letter code: L-rhamnose mutarotase (104 aa).

Substrate is bound at residue Tyr18. The active-site Proton donor is His22. Substrate is bound by residues Tyr41 and 76–77 (WW).

This sequence belongs to the rhamnose mutarotase family. In terms of assembly, homodimer.

It localises to the cytoplasm. It catalyses the reaction alpha-L-rhamnose = beta-L-rhamnose. It functions in the pathway carbohydrate metabolism; L-rhamnose metabolism. Involved in the anomeric conversion of L-rhamnose. This chain is L-rhamnose mutarotase, found in Acidiphilium cryptum (strain JF-5).